The following is a 193-amino-acid chain: Peptidyl-tRNA hydrolase (193 aa).

Residue tyrosine 16 participates in tRNA binding. Histidine 21 acts as the Proton acceptor in catalysis. TRNA is bound by residues phenylalanine 67, asparagine 69, and asparagine 115.

It belongs to the PTH family. In terms of assembly, monomer.

The protein resides in the cytoplasm. It catalyses the reaction an N-acyl-L-alpha-aminoacyl-tRNA + H2O = an N-acyl-L-amino acid + a tRNA + H(+). Hydrolyzes ribosome-free peptidyl-tRNAs (with 1 or more amino acids incorporated), which drop off the ribosome during protein synthesis, or as a result of ribosome stalling. Functionally, catalyzes the release of premature peptidyl moieties from peptidyl-tRNA molecules trapped in stalled 50S ribosomal subunits, and thus maintains levels of free tRNAs and 50S ribosomes. The polypeptide is Peptidyl-tRNA hydrolase (Vesicomyosocius okutanii subsp. Calyptogena okutanii (strain HA)).